The chain runs to 1469 residues: snRNA-activating protein complex subunit 4 (1469 aa).

The tract at residues 16–82 (ELERILDPGS…DPKDKTLPED (67 aa)) is disordered. Positions 24–36 (GSSGSHVEISESS) are enriched in low complexity. A compositionally biased stretch (acidic residues) spans 37 to 53 (LESDSEADSLPSEDLDP). Serine 68 is subject to Phosphoserine. Residues 84–133 (ETCLQLNMVYQEVIQEKLAEANLLLAQNREQQEELMRDLAGSKGTKVKDG) form an SNAPC5-binding region. In terms of domain architecture, Myb-like 1 spans 250-288 (EEALLGNRLDSHDWEKISNINFEGSRSAEEIRKFWQNSE). One can recognise an HTH myb-type 1 domain in the interval 289–343 (HPSINKQEWSREEEERLQAIAAAHGHLEWQKIAEELGTSRSAFQCLQKFQQHNKA). A DNA-binding region (H-T-H motif) is located at residues 317–341 (WQKIAEELGTSRSAFQCLQKFQQHN). Residues 344–395 (LKRKEWTEEEDRMLTQLVQEMRVGSHIPYRRIVYYMEGRDSMQLIYRWTKSL) enclose the Myb-like 2 domain. 2 HTH myb-type domains span residues 396 to 451 (DPGL…HFSL) and 452 to 503 (KKGR…GKKQ). DNA-binding regions (H-T-H motif) lie at residues 424 to 447 (WFKI…LRRL) and 476 to 499 (WAKI…KIMM). Disordered regions lie at residues 501 to 558 (KKQG…GDRA), 577 to 661 (QSTS…QALE), 685 to 710 (RSCT…SGDS), 834 to 894 (ASSS…KTVS), 932 to 981 (PLPH…DKRL), 1001 to 1051 (PAAS…PSPT), 1121 to 1167 (AAQG…PAEA), and 1184 to 1266 (IPEP…GPEK). Residues 503 to 516 (QGLRRRRRRARHSV) show a composition bias toward basic residues. Positions 519-541 (SSTSSSGSSSGSSGGSSSSSSSS) are enriched in low complexity. Serine 599 bears the Phosphoserine mark. Over residues 602-618 (KGSSASQGGSKEASTTA) the composition is skewed to polar residues. The residue at position 626 (serine 626) is a Phosphoserine. Residues 932–944 (PLPHTPHGRPAPG) are compositionally biased toward pro residues. The segment covering 951–968 (PLSGPGAPAAAKPGTSGS) has biased composition (low complexity). Polar residues predominate over residues 1014 to 1029 (ISVSCPESGLGQSQAP). Residues 1039–1051 (EAPPFLPAAPSPT) are compositionally biased toward pro residues. Phosphothreonine is present on threonine 1157. The span at 1184–1195 (IPEPRTSSHADP) shows a compositional bias: basic and acidic residues. Serine 1224 carries the post-translational modification Phosphoserine. The segment at 1281 to 1393 (ATQQWLGGQR…QGVRTTLSVP (113 aa)) is SNAPC2-binding. Phosphoserine occurs at positions 1398, 1400, and 1440. Residues 1430-1449 (APDSGKCSASSCLDTSNDPD) form a disordered region. Polar residues predominate over residues 1436-1445 (CSASSCLDTS).

In terms of assembly, part of the SNAPc complex composed of 5 subunits: SNAPC1, SNAPC2, SNAPC3, SNAPC4 and SNAPC5. SNAPC4 interacts with SNAPC1, SNAPC2, SNAPC5, BRF2 and TBP.

The protein resides in the nucleus. Part of the SNAPc complex required for the transcription of both RNA polymerase II and III small-nuclear RNA genes. Binds to the proximal sequence element (PSE), a non-TATA-box basal promoter element common to these 2 types of genes. Recruits TBP and BRF2 to the U6 snRNA TATA box. The polypeptide is snRNA-activating protein complex subunit 4 (Homo sapiens (Human)).